Consider the following 378-residue polypeptide: 4-hydroxy-3-methylbut-2-en-1-yl diphosphate synthase (flavodoxin) (378 aa).

Cys-268, Cys-271, Cys-303, and Glu-310 together coordinate [4Fe-4S] cluster. Residues 359-378 (AEREKEKEKEKEKEKETQEQ) form a disordered region.

Belongs to the IspG family. [4Fe-4S] cluster serves as cofactor.

The catalysed reaction is (2E)-4-hydroxy-3-methylbut-2-enyl diphosphate + oxidized [flavodoxin] + H2O + 2 H(+) = 2-C-methyl-D-erythritol 2,4-cyclic diphosphate + reduced [flavodoxin]. It participates in isoprenoid biosynthesis; isopentenyl diphosphate biosynthesis via DXP pathway; isopentenyl diphosphate from 1-deoxy-D-xylulose 5-phosphate: step 5/6. In terms of biological role, converts 2C-methyl-D-erythritol 2,4-cyclodiphosphate (ME-2,4cPP) into 1-hydroxy-2-methyl-2-(E)-butenyl 4-diphosphate. The protein is 4-hydroxy-3-methylbut-2-en-1-yl diphosphate synthase (flavodoxin) of Bacillus cereus (strain ZK / E33L).